We begin with the raw amino-acid sequence, 353 residues long: DNA polymerase IV (353 aa).

A UmuC domain is found at 6-187 (IIHIDCDCFY…LPVTKLHGVG (182 aa)). The Mg(2+) site is built by aspartate 10 and aspartate 105. Glutamate 106 is an active-site residue.

The protein belongs to the DNA polymerase type-Y family. As to quaternary structure, monomer. Mg(2+) is required as a cofactor.

It is found in the cytoplasm. It catalyses the reaction DNA(n) + a 2'-deoxyribonucleoside 5'-triphosphate = DNA(n+1) + diphosphate. Functionally, poorly processive, error-prone DNA polymerase involved in untargeted mutagenesis. Copies undamaged DNA at stalled replication forks, which arise in vivo from mismatched or misaligned primer ends. These misaligned primers can be extended by PolIV. Exhibits no 3'-5' exonuclease (proofreading) activity. May be involved in translesional synthesis, in conjunction with the beta clamp from PolIII. The sequence is that of DNA polymerase IV from Pseudomonas savastanoi pv. phaseolicola (strain 1448A / Race 6) (Pseudomonas syringae pv. phaseolicola (strain 1448A / Race 6)).